Consider the following 62-residue polypeptide: Photosystem II reaction center protein Z (62 aa).

2 helical membrane-spanning segments follow: residues Ala8–Ala28 and Phe41–Ile61.

Belongs to the PsbZ family. PSII is composed of 1 copy each of membrane proteins PsbA, PsbB, PsbC, PsbD, PsbE, PsbF, PsbH, PsbI, PsbJ, PsbK, PsbL, PsbM, PsbT, PsbY, PsbZ, Psb30/Ycf12, at least 3 peripheral proteins of the oxygen-evolving complex and a large number of cofactors. It forms dimeric complexes.

It localises to the plastid. It is found in the chloroplast thylakoid membrane. May control the interaction of photosystem II (PSII) cores with the light-harvesting antenna, regulates electron flow through the 2 photosystem reaction centers. PSII is a light-driven water plastoquinone oxidoreductase, using light energy to abstract electrons from H(2)O, generating a proton gradient subsequently used for ATP formation. The protein is Photosystem II reaction center protein Z of Panax ginseng (Korean ginseng).